Consider the following 88-residue polypeptide: Small ribosomal subunit protein bS20 (88 aa).

It belongs to the bacterial ribosomal protein bS20 family.

Functionally, binds directly to 16S ribosomal RNA. The polypeptide is Small ribosomal subunit protein bS20 (Chelativorans sp. (strain BNC1)).